A 229-amino-acid polypeptide reads, in one-letter code: MTHLLIVDDEKDIVDICQTYFEYEGYQVTTTTCGKEALKLLSSDIDIMILDIMMPEVSGYDIVKKMKDMQLDIPFIYLTAKTQEHDTIYALTLGADDYIKKPFSPRELVLRTNNLLARMSKSNHSNKIEQLEFDGLVLKNLSKTLTINNIEIPMRIKEFELLWYLASREGEVISKSELLEKVWGYDYYEDANTVNVHIHRIREKLEKHDFLPYTITTVWGLGYKFERSR.

A Response regulatory domain is found at 3-116; sequence HLLIVDDEKD…ELVLRTNNLL (114 aa). 4-aspartylphosphate is present on D51. Residues 128-227 constitute a DNA-binding region (ompR/PhoB-type); the sequence is IEQLEFDGLV…VWGLGYKFER (100 aa).

In terms of processing, phosphorylated by SaeS.

The protein localises to the cytoplasm. Member of the two-component regulatory system SaeR/SaeS. Probably functions as a transcriptional regulator via a specific DNA-binding domain, recognizing motifs near the promoter sequences of target genes. The polypeptide is Response regulator SaeR (saeR) (Staphylococcus epidermidis (strain ATCC 35984 / DSM 28319 / BCRC 17069 / CCUG 31568 / BM 3577 / RP62A)).